The following is a 968-amino-acid chain: RNA polymerase-associated protein RapA (968 aa).

Residues 163-332 (EVGSRYAPRV…FARLRLLDPD (170 aa)) enclose the Helicase ATP-binding domain. Position 176-183 (176-183 (DEVGLGKT)) interacts with ATP. Positions 278–281 (DEAH) match the DEAH box motif. Residues 491–655 (RVDWLIEFLK…EFADELINVL (165 aa)) form the Helicase C-terminal domain.

The protein belongs to the SNF2/RAD54 helicase family. RapA subfamily. As to quaternary structure, interacts with the RNAP. Has a higher affinity for the core RNAP than for the holoenzyme. Its ATPase activity is stimulated by binding to RNAP.

Transcription regulator that activates transcription by stimulating RNA polymerase (RNAP) recycling in case of stress conditions such as supercoiled DNA or high salt concentrations. Probably acts by releasing the RNAP, when it is trapped or immobilized on tightly supercoiled DNA. Does not activate transcription on linear DNA. Probably not involved in DNA repair. This chain is RNA polymerase-associated protein RapA, found in Shewanella frigidimarina (strain NCIMB 400).